A 50-amino-acid polypeptide reads, in one-letter code: Sperm protamine P1 (50 aa).

It belongs to the protamine P1 family. As to expression, testis.

The protein resides in the nucleus. Its subcellular location is the chromosome. Its function is as follows. Protamines substitute for histones in the chromatin of sperm during the haploid phase of spermatogenesis. They compact sperm DNA into a highly condensed, stable and inactive complex. This Chilonatalus micropus (Cuban funnel-eared bat) protein is Sperm protamine P1 (PRM1).